A 310-amino-acid chain; its full sequence is Malate dehydrogenase (310 aa).

NAD(+) is bound by residues 7–12 and Asp32; that span reads GAGHVG. Substrate contacts are provided by Arg81 and Arg87. NAD(+) contacts are provided by residues Asn94 and 117–119; that span reads VSN. Asn119 and Arg150 together coordinate substrate. His174 (proton acceptor) is an active-site residue.

It belongs to the LDH/MDH superfamily. MDH type 3 family.

The enzyme catalyses (S)-malate + NAD(+) = oxaloacetate + NADH + H(+). Functionally, catalyzes the reversible oxidation of malate to oxaloacetate. The polypeptide is Malate dehydrogenase (Chlorobium phaeobacteroides (strain BS1)).